The sequence spans 172 residues: Scytalone dehydratase-like protein Arp1 (172 aa).

Tyr-49 is a substrate binding site. Catalysis depends on residues His-84 and His-109. Asn-130 provides a ligand contact to substrate.

This sequence belongs to the scytalone dehydratase family. Homotrimer. Each subunit contains an active site, located in the central part of the hydrophobic core of the monomer, which functions independently.

Its function is as follows. Scytalone dehydratase-like protein; part of the Pks2 gene cluster that mediates the formation of infectious structures (appressoria), enabling these fungi to kill insects faster. The product of the Pks2 gene cluster is different from the one of Pks1 and has still not been identified. The sequence is that of Scytalone dehydratase-like protein Arp1 from Metarhizium robertsii (strain ARSEF 23 / ATCC MYA-3075) (Metarhizium anisopliae (strain ARSEF 23)).